Reading from the N-terminus, the 63-residue chain is MKNTSILFILGLALLLVLAFEVQVGESDGECGGFWWKCGSGKPACCPKYVCSPKWGLCNFPMP.

A signal peptide spans 1–21 (MKNTSILFILGLALLLVLAFE). Positions 22–29 (VQVGESDG) are excised as a propeptide. 3 disulfides stabilise this stretch: cysteine 31–cysteine 46, cysteine 38–cysteine 51, and cysteine 45–cysteine 58.

This sequence belongs to the neurotoxin 10 (Hwtx-1) family. 44 (Jztx-4) subfamily. As to expression, expressed by the venom gland.

It localises to the secreted. Its function is as follows. Gating modifier of Kv2.1/KCNB1, Kv2.2/KCNB2 and Kv4.3/KCND3 channels. This Chilobrachys guangxiensis (Chinese earth tiger tarantula) protein is Kappa-theraphotoxin-Cg3a 1.